Here is a 377-residue protein sequence, read N- to C-terminus: Galactoside alpha-(1,2)-fucosyltransferase 1 (377 aa).

At 1–8 (MWTPSRRQ) the chain is on the cytoplasmic side. Residues 9-26 (LCLAFLLVCVLSAGSFFF) traverse the membrane as a helical; Signal-anchor for type II membrane protein segment. The Lumenal segment spans residues 27 to 377 (HLNGGNFFRN…WKPDSLFRLV (351 aa)). N-linked (GlcNAc...) asparagine glycosylation is found at Asn-67, Asn-303, and Asn-329.

It belongs to the glycosyltransferase 11 family. In terms of tissue distribution, in the adult, highly expressed in pancreas, testis and epididymis and to a lesser extent in thymus, lung, stomach, small intestine, colon, spleen and uterus. Not expressed in brain, heart, skeletal muscle, kidney, liver and bone marrow. Expressed in epididymis and testis.

The protein resides in the golgi apparatus. It is found in the golgi stack membrane. The catalysed reaction is a beta-D-galactosyl-(1-&gt;4)-N-acetyl-beta-D-glucosaminyl derivative + GDP-beta-L-fucose = an alpha-L-Fuc-(1-&gt;2)-beta-D-Gal-(1-&gt;4)-beta-D-GlcNAc derivative + GDP + H(+). The enzyme catalyses a ganglioside GA1 + GDP-beta-L-fucose = a ganglioside Fuc-GA1 + GDP + H(+). It catalyses the reaction a beta-D-Gal-(1-&gt;3)-beta-D-GlcNAc-(1-&gt;3)-beta-D-Gal-(1-&gt;4)-beta-D-Glc-(1&lt;-&gt;1')-Cer(d18:1(4E)) + GDP-beta-L-fucose = alpha-L-fucosyl-(1-&gt;2)- beta-D-galactosyl-(1-&gt;3)-N-acetyl-beta-D-glucosaminyl-(1-&gt;3)-beta-D-galactosyl-(1-&gt;4)-beta-D-glucosyl-(1&lt;-&gt;1')-N-acylsphing-4-enine + GDP + H(+). It carries out the reaction a neolactoside nLc4Cer(d18:1(4E)) + GDP-beta-L-fucose = a neolactoside IV(2)-alpha-Fuc-nLc4Cer(d18:1(4E)) + GDP + H(+). The catalysed reaction is a ganglioside GM1 + GDP-beta-L-fucose = a ganglioside Fuc-GM1 + GDP + H(+). The enzyme catalyses beta-D-galactosyl-(1-&gt;3)-N-acetyl-D-galactosamine + GDP-beta-L-fucose = alpha-L-fucosyl-(1-&gt;2)-beta-D-galactosyl-(1-&gt;3)-N-acetyl-D-galactosamine + GDP + H(+). It participates in protein modification; protein glycosylation. Its function is as follows. Catalyzes the transfer of L-fucose, from a guanosine diphosphate-beta-L-fucose, to the terminal galactose residue of glycoconjugates through an alpha(1,2) linkage leading to H antigen synthesis that is an intermediate substrate in the synthesis of ABO blood group antigens. H antigen is essential for maturation of the glomerular layer of the main olfactory bulb, in cell migration and early cell-cell contacts during tumor associated angiogenesis. Preferentially fucosylates soluble lactose and to a lesser extent, fucosylates glycolipids gangliosides GA1 and GM1a. The protein is Galactoside alpha-(1,2)-fucosyltransferase 1 of Mus musculus (Mouse).